The primary structure comprises 91 residues: Pre-early 3 receptor internalization and degradation alpha protein (91 aa).

The Cytoplasmic segment spans residues 1 to 4; it reads MIPR. Positions 1-22 are cleaved as a propeptide — signal peptide; sequence MIPRVLILLTLVALFCACSTLA. A helical transmembrane segment spans residues 5–25; it reads VLILLTLVALFCACSTLAAVA. At 26–34 the chain is on the lumenal side; that stretch reads HIEVDCIPP. A helical transmembrane segment spans residues 35-60; it reads FTVYLLYGFVTLILICSLVTVVIAFI. The Cytoplasmic segment spans residues 61–91; the sequence is QFIDWVCVRIAYLRHHPQYRDRTIADLLRIL.

This sequence belongs to the adenoviridae E3-RID-alpha family. In terms of assembly, homodimer with only one chain cleaved by signal peptidase. Interacts with E3 RID-beta and E3 CR1-alpha. Post-translationally, the signal peptide is only cleaved partially by host signal peptidase. This results in two forms of the protein, one uncleaved with two transmembrane regions, and one cleaved with one transmembrane region.

It is found in the host membrane. The protein resides in the host endoplasmic reticulum. In terms of biological role, prevents infected cell apoptosis induced by the host immune system. Acts by down-regulating a number of cell surface receptors in the tumor necrosis factor (TNF) receptor superfamily, namely FAS, TNFRSF10A/TRAIL receptor 1, and TNFRSF10B/TRAIL receptor 2. Down-regulation of these death receptors protects adenovirus-infected cells from apoptosis induced by the death receptor ligands Fas ligand and TRAIL. RID complex also down-regulates certain tyrosine kinase cell surface receptors, especially the epidermal growth factor receptor (EGFR). RID-mediated Fas and EGFR down-regulation occurs via endocytosis of the receptors into endosomes followed by transport to and degradation within lysosomes. This is Pre-early 3 receptor internalization and degradation alpha protein from Homo sapiens (Human).